Consider the following 127-residue polypeptide: Large ribosomal subunit protein bL17 (127 aa).

It belongs to the bacterial ribosomal protein bL17 family. As to quaternary structure, part of the 50S ribosomal subunit. Contacts protein L32.

The sequence is that of Large ribosomal subunit protein bL17 from Ligilactobacillus salivarius (strain UCC118) (Lactobacillus salivarius).